Reading from the N-terminus, the 448-residue chain is 4-hydroxybenzoate transporter PcaK (448 aa).

At 1-30 (MNQAQNSVGKSLDVQSFINQQPLSRYQWRV) the chain is on the cytoplasmic side. Residues 31–51 (VLLCFLIVFLDGLDTAAMGFI) form a helical membrane-spanning segment. Residues 52 to 67 (APALSQEWGIDRASLG) lie on the Periplasmic side of the membrane. A helical membrane pass occupies residues 68-88 (PVMSAALIGMVFGALGSGPLA). Residues 89–94 (DRFGRK) are Cytoplasmic-facing. A helical transmembrane segment spans residues 95 to 115 (GVLVGAVLVFGGFSLASAYAT). At 116 to 119 (NVDQ) the chain is on the periplasmic side. The helical transmembrane segment at 120-140 (LLVLRFLTGLGLGAGMPNATT) threads the bilayer. The Cytoplasmic portion of the chain corresponds to 141-152 (LLSEYTPERLKS). A helical transmembrane segment spans residues 153–173 (LLVTSMFCGFNLGMAGGGFIS). Residues 174-184 (AKMIPAYGWHS) lie on the Periplasmic side of the membrane. A helical membrane pass occupies residues 185–205 (LLVIGGVLPLLLALVLMVWLP). The Cytoplasmic segment spans residues 206–261 (ESARFLVVRNRGTDKIRKTLSPIAPQVVAEAGSFSVPEQKAVAARSVFAVIFSGTY). A helical membrane pass occupies residues 262 to 282 (GLGTMLLWLTYFMGLVIVYLL). Over 283 to 301 (TSWLPTLMRDSGASMEQAA) the chain is Periplasmic. The helical transmembrane segment at 302–322 (FIGALFQFGGVLSAVGVGWAM) threads the bilayer. Residues 323–329 (DRYNPHK) are Cytoplasmic-facing. Residues 330–350 (VIGIFYLLAGVFAYAVGQSLG) form a helical membrane-spanning segment. Residue asparagine 351 is a topological domain, periplasmic. Residues 352–372 (ITVLATLVLIAGMCVNGAQSA) form a helical membrane-spanning segment. Residues 373–398 (MPSLAARFYPTQGRATGVSWMLGIGR) are Cytoplasmic-facing. A helical transmembrane segment spans residues 399–419 (FGAILGAWSGATLLGLGWNFE). At 420 to 421 (QV) the chain is on the periplasmic side. The helical transmembrane segment at 422–442 (LTALLVPAALATVGVIVKGLV) threads the bilayer. The Cytoplasmic portion of the chain corresponds to 443-448 (SHADAT).

It belongs to the major facilitator superfamily. Aromatic acid:H(+) symporter (AAHS) (TC 2.A.1.15) family.

The protein resides in the cell inner membrane. Transports 4-hydroxybenzoate (4-HBA) and protocatechuate across the membrane. Driven by the proton motive force. Also functions as a chemoreceptor, which is required for chemotaxis to aromatic acids. This Pseudomonas putida (Arthrobacter siderocapsulatus) protein is 4-hydroxybenzoate transporter PcaK (pcaK).